Here is a 51-residue protein sequence, read N- to C-terminus: Large ribosomal subunit protein bL33 (51 aa).

The segment at 1–24 (MREKIRLNSSAGTGHFYTTDKNKR) is disordered.

It belongs to the bacterial ribosomal protein bL33 family.

The chain is Large ribosomal subunit protein bL33 from Cellvibrio japonicus (strain Ueda107) (Pseudomonas fluorescens subsp. cellulosa).